We begin with the raw amino-acid sequence, 188 residues long: Peptidyl-tRNA hydrolase (188 aa).

TRNA is bound at residue Tyr15. Residue His20 is the Proton acceptor of the active site. TRNA contacts are provided by Phe63, Asn65, and Asn111.

Belongs to the PTH family. In terms of assembly, monomer.

It is found in the cytoplasm. The catalysed reaction is an N-acyl-L-alpha-aminoacyl-tRNA + H2O = an N-acyl-L-amino acid + a tRNA + H(+). Hydrolyzes ribosome-free peptidyl-tRNAs (with 1 or more amino acids incorporated), which drop off the ribosome during protein synthesis, or as a result of ribosome stalling. Functionally, catalyzes the release of premature peptidyl moieties from peptidyl-tRNA molecules trapped in stalled 50S ribosomal subunits, and thus maintains levels of free tRNAs and 50S ribosomes. The chain is Peptidyl-tRNA hydrolase from Hydrogenobaculum sp. (strain Y04AAS1).